The following is a 901-amino-acid chain: Protein translocase subunit SecA (901 aa).

Residues glutamine 85, 103-107 (GEGKT), and aspartate 510 contribute to the ATP site. Positions 836–845 (EEAERARQEM) are enriched in basic and acidic residues. A disordered region spans residues 836-901 (EEAERARQEM…HCHGSRVARQ (66 aa)). Over residues 849-866 (INQNNLPVDENSQTTQNS) the composition is skewed to polar residues. Zn(2+)-binding residues include cysteine 882, cysteine 884, cysteine 893, and histidine 894. Over residues 888 to 901 (KKYKHCHGSRVARQ) the composition is skewed to basic residues.

The protein belongs to the SecA family. As to quaternary structure, monomer and homodimer. Part of the essential Sec protein translocation apparatus which comprises SecA, SecYEG and auxiliary proteins SecDF-YajC and YidC. The cofactor is Zn(2+).

It localises to the cell inner membrane. Its subcellular location is the cytoplasm. It carries out the reaction ATP + H2O + cellular proteinSide 1 = ADP + phosphate + cellular proteinSide 2.. In terms of biological role, part of the Sec protein translocase complex. Interacts with the SecYEG preprotein conducting channel. Has a central role in coupling the hydrolysis of ATP to the transfer of proteins into and across the cell membrane, serving both as a receptor for the preprotein-SecB complex and as an ATP-driven molecular motor driving the stepwise translocation of polypeptide chains across the membrane. This chain is Protein translocase subunit SecA, found in Haemophilus influenzae (strain PittEE).